The sequence spans 483 residues: Sodium/pantothenate symporter (483 aa).

The Periplasmic segment spans residues 1–2 (MQ). The chain crosses the membrane as a helical span at residues 3-23 (LEVILPLVAYLVVVFGISVYA). The Cytoplasmic segment spans residues 24-42 (MRKRSTGTFLNEYFLGSRS). A helical membrane pass occupies residues 43-63 (MGGIVLAMTLTATYISASSFI). The Periplasmic portion of the chain corresponds to 64-73 (GGPGAAYKYG). Residues 74–94 (LGWVLLAMIQLPAVWLSLGIL) traverse the membrane as a helical segment. Topologically, residues 95–123 (GKKFAILARRYNAVTLNDMLFARYQSRLL) are cytoplasmic. The chain crosses the membrane as a helical span at residues 124–144 (VWLASLSLLVAFVGAMTVQFI). Topologically, residues 145–157 (GGARLLETAAGIP) are periplasmic. A helical membrane pass occupies residues 158-178 (YETGLLIFGISIALYTAFGGF). The Cytoplasmic portion of the chain corresponds to 179 to 189 (RASVLNDTMQG). A helical membrane pass occupies residues 190-210 (LVMLIGTVVLLIGVVHAAGGL). Residues 211–232 (SNAVQTLQTIDPQLVTPQGADD) lie on the Periplasmic side of the membrane. The helical transmembrane segment at 233 to 253 (ILSPAFMTSFWVLVCFGVIGL) threads the bilayer. The Cytoplasmic segment spans residues 254–272 (PHTAVRCISYKDSKAVHRG). The chain crosses the membrane as a helical span at residues 273-293 (IIIGTIVVAILMFGMHLAGAL). The Periplasmic portion of the chain corresponds to 294 to 305 (GRAVIPDLTVPD). The chain crosses the membrane as a helical span at residues 306 to 326 (LVIPTLMVKVLPPFAAGIFLA). At 327–368 (APMAAIMSTINAQLLQSSATIIKDLYLNIRPDQMQNETRLKR) the chain is on the cytoplasmic side. A helical membrane pass occupies residues 369–389 (MSAVITLVLGALLLLAAWKPP). Residues 390–391 (EM) are Periplasmic-facing. Residues 392 to 412 (IIWLNLLAFGGLEAVFLWPLV) form a helical membrane-spanning segment. At 413–423 (LGLYWERANAK) the chain is on the cytoplasmic side. A helical transmembrane segment spans residues 424–444 (GALSAMIVGGVLYAVLATLNI). Residue Gln445 is a topological domain, periplasmic. Residues 446–466 (YLGFHPIVPSLLLSLLAFLVG) form a helical membrane-spanning segment. Over 467–483 (NRFGTSVPQATVLTTDK) the chain is Cytoplasmic.

This sequence belongs to the sodium:solute symporter (SSF) (TC 2.A.21) family.

It is found in the cell inner membrane. The catalysed reaction is (R)-pantothenate(in) + Na(+)(in) = (R)-pantothenate(out) + Na(+)(out). Its activity is regulated as follows. Pantothenate uptake is not reduced in osmotically shocked cells or by ATP depletion with arsenate, but is reduced greater than 90% by the dissipation of the membrane electrochemical gradient with 2,4-dinitrophenol. Its function is as follows. Catalyzes the sodium-dependent uptake of extracellular pantothenate. The sequence is that of Sodium/pantothenate symporter from Escherichia coli (strain K12).